Here is a 609-residue protein sequence, read N- to C-terminus: Protein FRIGIDA (609 aa).

Over residues 1-18 (MSNYPPTVAAQPTTTANP) the composition is skewed to low complexity. Positions 1-31 (MSNYPPTVAAQPTTTANPLLQRHQSEQRRRE) are disordered. 2 coiled-coil regions span residues 60 to 97 (DELAAFSVAVETFKRQFDDLQKHIESIENAIDSKLESN) and 409 to 440 (QIKEQIVSLEKDTLQLDKEMEEKARSLSLMEE). Disordered regions lie at residues 454-488 (RPRLSPMEMPPVTSSSYSPIYRDRSFPSQRDDDQD) and 587-609 (SEERYLGLSNQRSPRSNSSLDPK). The segment covering 474-484 (YRDRSFPSQRD) has biased composition (basic and acidic residues). The segment covering 594–609 (LSNQRSPRSNSSLDPK) has biased composition (polar residues).

It belongs to the Frigida family. In terms of assembly, homodimer. Component of the transcription activator complex FRI-C composed of FRI, FRL1, SUF4, FLX and FES1. Interacts (via N-terminus) with FRL1 and (via C-terminus) with FLX (via N-terminus), SUF4 (via C-terminus) and FES1 (via C-terminus). Interacts with ASHH2 and RIN1, a component of the SWR1 chromatin-remodeling complex. Interacts with CBP20, FIP1 and FIP2. As to expression, expressed in ovules, but not in stamens.

It is found in the nucleus speckle. Functionally, required for the regulation of flowering time in the late-flowering phenotype. Involved in the enrichment of a WDR5A-containing COMPASS-like complex at the 'FLOWERING LOCUS C' that trimethylates histone H3 'Lys-4', leading to FLC up-regulation and RNA levels increase. Variants with an early-flowering phenotype (Including cv. Columbia, cv. Landsberg Erecta and cv. Wassilewskija) show loss-of-function mutations of FRI. Able to delay flowering independently of FRL1 activity. Dispensable for the reactivation of FLC in early embryogenesis, but required to maintain high levels of FLC expression in later embryonic and vegetative development. Suppresses the repression of FLC by the autonomous pathway, but has no effect on the expression of the genes involved in this pathway. This is Protein FRIGIDA from Arabidopsis thaliana (Mouse-ear cress).